Reading from the N-terminus, the 390-residue chain is Protein SOSEKI 4 (390 aa).

A DIX-like oligomerization domain region spans residues 22 to 115; it reads RMAEVLYVLS…YALKATKRFD (94 aa). 2 disordered regions span residues 210 to 247 and 291 to 321; these read KSNSGATKRGKASVTPKQCHPSSRPAYWEFSPQGNRTG and RESNNSESSDDEQPSVQAETHVSKLSKSGGS. Residues 304–321 are compositionally biased toward polar residues; the sequence is PSVQAETHVSKLSKSGGS.

Belongs to the SOSEKI family. Homodimer. Forms long polymer filaments with other SOKs proteins polymers crucial for polar localization and biological activity.

The protein localises to the cell membrane. Its function is as follows. SOSEKI proteins locally interpret global polarity cues and can influence cell division orientation to coordinate cell polarization relative to body axes. The protein is Protein SOSEKI 4 of Physcomitrium patens (Spreading-leaved earth moss).